Here is a 2353-residue protein sequence, read N- to C-terminus: Otogelin-like protein (2353 aa).

An N-terminal signal peptide occupies residues 1–31 (MNIVRKLNLMIPWSIFLLHVLLFSLQEYICA). The region spanning 121 to 297 (GICKTWGQYH…VQTPDDTKCV (177 aa)) is the VWFD 1 domain. 2 disulfides stabilise this stretch: C123–C257 and C145–C296. A glycan (N-linked (GlcNAc...) asparagine) is linked at N144. The TIL 1 domain occupies 390 to 443 (CDDSFVHRDCISCCPPTCTFEKQCLGSNLHCLDGCYCPDGLVMDNGTCISLENC). N-linked (GlcNAc...) asparagine glycans are attached at residues N434 and N473. In terms of domain architecture, VWFD 2 spans 481-654 (VQCSVVGDSH…NAWRVSSTCF (174 aa)). 3 cysteine pairs are disulfide-bonded: C483–C618, C505–C653, and C527–C535. In terms of domain architecture, TIL 2 spans 745-800 (CQKGMLYHHCSSFCLHSCISLSSPEQCSDDCAEGCNCPEGKFYEDTLNFCVPIFHC). N826 and N876 each carry an N-linked (GlcNAc...) asparagine glycan. The VWFD 3 domain occupies 946–1115 (AVCTIYGDRH…SWALGQCESP (170 aa)). 2 disulfides stabilise this stretch: C948/C1078 and C992/C999. N1289, N1604, and N2198 each carry an N-linked (GlcNAc...) asparagine glycan. Residues 1534–1723 (CRCSMLSELS…SWEIEKSFEV (190 aa)) form the VWFD 4 domain. A disulfide bridge links C1536 with C1683. 4 disulfide bridges follow: C2261-C2317, C2282-C2331, C2293-C2348, and C2297-C2350. One can recognise a CTCK domain in the interval 2261–2353 (CKREERICQK…EPIDCTCQWN (93 aa)).

Belongs to the otogelin family. As to expression, expressed at high levels in fetal inner ear and heart. Low levels in fetal skeletal muscle, kidney, spleen and colon. Not detected in fetal liver, lung, brain, nor in fetal stomach. In adult tissues, highest levels in brain, kidney, heart and retina. Relatively low levels in lung, spleen and duodenum. Not detected in adult skeletal muscle, liver, nor testis.

The protein localises to the secreted. This chain is Otogelin-like protein (OTOGL), found in Homo sapiens (Human).